The chain runs to 894 residues: Protein translocase subunit SecA (894 aa).

ATP contacts are provided by residues Q87, 105 to 109 (GEGKT), and D512. The disordered stretch occupies residues 857–894 (FNLGDEPEAQQPVTSKKVGRNEPCPCGSGKKYKQCCGK). Residues C880, C882, C891, and C892 each coordinate Zn(2+).

It belongs to the SecA family. In terms of assembly, monomer and homodimer. Part of the essential Sec protein translocation apparatus which comprises SecA, SecYEG and auxiliary proteins SecDF-YajC and YidC. The cofactor is Zn(2+).

Its subcellular location is the cell inner membrane. The protein localises to the cytoplasm. The enzyme catalyses ATP + H2O + cellular proteinSide 1 = ADP + phosphate + cellular proteinSide 2.. Part of the Sec protein translocase complex. Interacts with the SecYEG preprotein conducting channel. Has a central role in coupling the hydrolysis of ATP to the transfer of proteins into and across the cell membrane, serving as an ATP-driven molecular motor driving the stepwise translocation of polypeptide chains across the membrane. The chain is Protein translocase subunit SecA from Geotalea uraniireducens (strain Rf4) (Geobacter uraniireducens).